The sequence spans 347 residues: Probable arabinogalactan endo-beta-1,4-galactanase A (347 aa).

Positions 1–16 are cleaved as a signal peptide; the sequence is MLFSYLLATLPLLANA. Glutamate 150 acts as the Proton donor in catalysis. The Nucleophile role is filled by glutamate 260.

The protein belongs to the glycosyl hydrolase 53 family.

The protein localises to the secreted. It catalyses the reaction The enzyme specifically hydrolyzes (1-&gt;4)-beta-D-galactosidic linkages in type I arabinogalactans.. Its function is as follows. Endogalactanase involved in the degradation of plant cell wall polysaccharides, and more particularly of hairy regions of pectin. This Aspergillus flavus (strain ATCC 200026 / FGSC A1120 / IAM 13836 / NRRL 3357 / JCM 12722 / SRRC 167) protein is Probable arabinogalactan endo-beta-1,4-galactanase A (galA).